We begin with the raw amino-acid sequence, 200 residues long: Somatotropin (200 aa).

An N-terminal signal peptide occupies residues 1–22 (MARVLVVLSVVVASLFFSQGAT). H38 lines the Zn(2+) pocket. An intrachain disulfide couples C71 to C173. Residue E182 participates in Zn(2+) binding. Cysteines 190 and 198 form a disulfide.

It belongs to the somatotropin/prolactin family.

The protein resides in the secreted. Its function is as follows. Growth hormone plays an important role in growth control and is involved in the regulation of several anabolic processes. Implicated as an osmoregulatory substance important for seawater adaptation. The chain is Somatotropin (gh) from Heteropneustes fossilis (Stinging catfish).